A 592-amino-acid polypeptide reads, in one-letter code: Arginine--tRNA ligase (592 aa).

Residues 129 to 139 carry the 'HIGH' region motif; the sequence is ANPTGPLHVGH.

It belongs to the class-I aminoacyl-tRNA synthetase family. In terms of assembly, monomer.

It localises to the cytoplasm. The enzyme catalyses tRNA(Arg) + L-arginine + ATP = L-arginyl-tRNA(Arg) + AMP + diphosphate. The chain is Arginine--tRNA ligase from Dichelobacter nodosus (strain VCS1703A).